The primary structure comprises 333 residues: Quinolinate synthase (333 aa).

2 residues coordinate iminosuccinate: His41 and Ser58. Cys103 serves as a coordination point for [4Fe-4S] cluster. Residues 129 to 131 (YIN) and Ser146 contribute to the iminosuccinate site. [4Fe-4S] cluster is bound at residue Cys189. Iminosuccinate contacts are provided by residues 215–217 (HPE) and Thr232. Residue Cys282 coordinates [4Fe-4S] cluster.

This sequence belongs to the quinolinate synthase family. Type 2 subfamily. [4Fe-4S] cluster is required as a cofactor.

It localises to the cytoplasm. The catalysed reaction is iminosuccinate + dihydroxyacetone phosphate = quinolinate + phosphate + 2 H2O + H(+). It participates in cofactor biosynthesis; NAD(+) biosynthesis; quinolinate from iminoaspartate: step 1/1. Catalyzes the condensation of iminoaspartate with dihydroxyacetone phosphate to form quinolinate. In Prochlorococcus marinus (strain MIT 9303), this protein is Quinolinate synthase.